A 128-amino-acid polypeptide reads, in one-letter code: MAEWHKIIEDISKNNKFEDAAIVDYKTTKNVLAAIPNRTFAKINPLITNRNILKPLIGQKYCIVYTNSLMDENTYAMELLTGYAPVSPIVIARTHTALIFLMGKPTTSRRDVYRTCRDHATRVRATGN.

The protein belongs to the profilin family.

Its function is as follows. More likely to influence phosphoinositide metabolism than actin assembly. This is Profilin from Homo sapiens (Human).